The sequence spans 390 residues: Pepsin B (390 aa).

Residues 1-16 (MKIQVLVLVCLHLSEG) form the signal peptide. The propeptide at 17 to 59 (VERIILKKGKSIRQVMEERGVLETFLRNHPKVDPAAKYLFNND) is activation peptide. In terms of domain architecture, Peptidase A1 spans 74-387 (YFGEISIGTP…DMAANRVGFA (314 aa)). Residue aspartate 92 is part of the active site. Intrachain disulfides connect cysteine 105/cysteine 110 and cysteine 269/cysteine 273. Aspartate 278 is a catalytic residue. A disulfide bridge connects residues cysteine 312 and cysteine 345.

Belongs to the peptidase A1 family.

It is found in the secreted. It catalyses the reaction Degradation of gelatin, little activity on hemoglobin. Specificity on B chain of insulin more restricted than that of pepsin A. Does not cleave 1-Phe-|-Val-2, 4-Gln-|-His-5 or 23-Gly-|-Phe-24.. Functionally, hydrolyzes various peptides including beta-endorphin, insulin B chain, dynorphin A, and neurokinin A, with high specificity for the cleavage of the Phe-Xaa bonds. The polypeptide is Pepsin B (PGB) (Canis lupus familiaris (Dog)).